We begin with the raw amino-acid sequence, 205 residues long: Proteasome subunit beta type-3 (205 aa).

It belongs to the peptidase T1B family. The 26S proteasome consists of a 20S proteasome core and two 19S regulatory subunits. The 20S proteasome core is composed of 28 subunits that are arranged in four stacked rings, resulting in a barrel-shaped structure. The two end rings are each formed by seven alpha subunits, and the two central rings are each formed by seven beta subunits. The catalytic chamber with the active sites is on the inside of the barrel.

It is found in the cytoplasm. Its subcellular location is the nucleus. Its function is as follows. Non-catalytic component of the proteasome, a multicatalytic proteinase complex which is characterized by its ability to cleave peptides with Arg, Phe, Tyr, Leu, and Glu adjacent to the leaving group at neutral or slightly basic pH. The proteasome has an ATP-dependent proteolytic activity. This chain is Proteasome subunit beta type-3 (psmb3), found in Oncorhynchus mykiss (Rainbow trout).